The sequence spans 199 residues: Tropomyosin-1 (199 aa).

Residues 1-199 (MDKIREKLSN…DEIAASLENL (199 aa)) are a coiled coil. Glycyl lysine isopeptide (Lys-Gly) (interchain with G-Cter in ubiquitin) cross-links involve residues K39 and K59. Disordered stretches follow at residues 59-81 (KLEA…ENQI) and 102-147 (LAES…TEKL). 2 stretches are compositionally biased toward basic and acidic residues: residues 68–80 (KQTE…KENQ) and 102–114 (LAES…DSHH). Polar residues predominate over residues 115–126 (LQSNNDNFSKKN). Residues 136 to 147 (SDTKLKETTEKL) show a composition bias toward basic and acidic residues. K187 participates in a covalent cross-link: Glycyl lysine isopeptide (Lys-Gly) (interchain with G-Cter in ubiquitin). S195 carries the phosphoserine modification.

In terms of assembly, homodimer.

It is found in the cytoplasm. The protein localises to the cytoskeleton. The chain is Tropomyosin-1 (TPM1) from Saccharomyces cerevisiae (strain ATCC 204508 / S288c) (Baker's yeast).